The chain runs to 363 residues: dTDP-L-rhamnose 4-epimerase (363 aa).

Residues 18-24 (GGAGFIG), 68-69 (DV), and 90-94 (LAAET) contribute to the NAD(+) site. The substrate site is built by S136 and Y191. 2 residues coordinate NAD(+): Y191 and K195. Catalysis depends on Y191, which acts as the Proton acceptor. Residues N220 and R259 each contribute to the substrate site.

This sequence belongs to the NAD(P)-dependent epimerase/dehydratase family. Requires NAD(+) as cofactor.

It catalyses the reaction dTDP-6-deoxy-beta-L-talose = dTDP-beta-L-rhamnose. Its pathway is bacterial outer membrane biogenesis; LPS O-antigen biosynthesis. Functionally, catalyzes the interconvertion of dTDP-6-deoxy-L-talose and dTDP-L-rhamnose. The equilibrium is strongly toward dTDP-L-rhamnose. In Burkholderia thailandensis (strain ATCC 700388 / DSM 13276 / CCUG 48851 / CIP 106301 / E264), this protein is dTDP-L-rhamnose 4-epimerase (wbiB).